Here is a 625-residue protein sequence, read N- to C-terminus: DNA-directed RNA polymerase subunit gamma (625 aa).

Positions 71, 73, 86, and 89 each coordinate Zn(2+). Residues Asp467, Asp469, and Asp471 each contribute to the Mg(2+) site.

The protein belongs to the RNA polymerase beta' chain family. RpoC1 subfamily. In cyanobacteria the RNAP catalytic core is composed of 2 alpha, 1 beta, 1 beta', 1 gamma and 1 omega subunit. When a sigma factor is associated with the core the holoenzyme is formed, which can initiate transcription. Mg(2+) is required as a cofactor. It depends on Zn(2+) as a cofactor.

It catalyses the reaction RNA(n) + a ribonucleoside 5'-triphosphate = RNA(n+1) + diphosphate. Its function is as follows. DNA-dependent RNA polymerase catalyzes the transcription of DNA into RNA using the four ribonucleoside triphosphates as substrates. In Gloeothece citriformis (strain PCC 7424) (Cyanothece sp. (strain PCC 7424)), this protein is DNA-directed RNA polymerase subunit gamma.